A 125-amino-acid polypeptide reads, in one-letter code: Large ribosomal subunit protein bL12 (125 aa).

The protein belongs to the bacterial ribosomal protein bL12 family. Homodimer. Part of the ribosomal stalk of the 50S ribosomal subunit. Forms a multimeric L10(L12)X complex, where L10 forms an elongated spine to which 2 to 4 L12 dimers bind in a sequential fashion. Binds GTP-bound translation factors.

Forms part of the ribosomal stalk which helps the ribosome interact with GTP-bound translation factors. Is thus essential for accurate translation. The chain is Large ribosomal subunit protein bL12 from Hyphomonas neptunium (strain ATCC 15444).